Here is a 677-residue protein sequence, read N- to C-terminus: DNA ligase (677 aa).

NAD(+)-binding positions include 43–47, 92–93, and glutamate 122; these read DHVYD and SM. The N6-AMP-lysine intermediate role is filled by lysine 124. NAD(+) is bound by residues arginine 145, glutamate 179, lysine 295, and lysine 319. Zn(2+)-binding residues include cysteine 413, cysteine 416, cysteine 431, and cysteine 436. Residues 599 to 677 form the BRCT domain; it reads TSDSYFNGKT…EADLDNYLAQ (79 aa).

It belongs to the NAD-dependent DNA ligase family. LigA subfamily. Requires Mg(2+) as cofactor. The cofactor is Mn(2+).

It carries out the reaction NAD(+) + (deoxyribonucleotide)n-3'-hydroxyl + 5'-phospho-(deoxyribonucleotide)m = (deoxyribonucleotide)n+m + AMP + beta-nicotinamide D-nucleotide.. DNA ligase that catalyzes the formation of phosphodiester linkages between 5'-phosphoryl and 3'-hydroxyl groups in double-stranded DNA using NAD as a coenzyme and as the energy source for the reaction. It is essential for DNA replication and repair of damaged DNA. The polypeptide is DNA ligase (Latilactobacillus sakei subsp. sakei (strain 23K) (Lactobacillus sakei subsp. sakei)).